The sequence spans 504 residues: Maturase K (504 aa).

The protein belongs to the intron maturase 2 family. MatK subfamily.

It is found in the plastid. It localises to the chloroplast. Usually encoded in the trnK tRNA gene intron. Probably assists in splicing its own and other chloroplast group II introns. The polypeptide is Maturase K (Vigna mungo (Black gram)).